A 258-amino-acid chain; its full sequence is Indole-3-glycerol phosphate synthase (258 aa).

This sequence belongs to the TrpC family.

It catalyses the reaction 1-(2-carboxyphenylamino)-1-deoxy-D-ribulose 5-phosphate + H(+) = (1S,2R)-1-C-(indol-3-yl)glycerol 3-phosphate + CO2 + H2O. Its pathway is amino-acid biosynthesis; L-tryptophan biosynthesis; L-tryptophan from chorismate: step 4/5. The sequence is that of Indole-3-glycerol phosphate synthase from Campylobacter jejuni subsp. doylei (strain ATCC BAA-1458 / RM4099 / 269.97).